Reading from the N-terminus, the 170-residue chain is Adenine phosphoribosyltransferase (170 aa).

It belongs to the purine/pyrimidine phosphoribosyltransferase family. Homodimer.

Its subcellular location is the cytoplasm. It carries out the reaction AMP + diphosphate = 5-phospho-alpha-D-ribose 1-diphosphate + adenine. The protein operates within purine metabolism; AMP biosynthesis via salvage pathway; AMP from adenine: step 1/1. Catalyzes a salvage reaction resulting in the formation of AMP, that is energically less costly than de novo synthesis. The chain is Adenine phosphoribosyltransferase from Lactococcus lactis subsp. cremoris (strain MG1363).